Reading from the N-terminus, the 462-residue chain is Retinoic acid receptor RXR-alpha (462 aa).

Residues 1-107 (MDTKHFLPLD…MNPVSSSEDI (107 aa)) form a disordered region. Residues 1–134 (MDTKHFLPLD…GNMASFTKHI (134 aa)) are modulating. Lys-4 is covalently cross-linked (Glycyl lysine isopeptide (Lys-Gly) (interchain with G-Cter in SUMO2)). Residues 11–24 (FSTQVNSSLTSPTG) show a composition bias toward polar residues. 2 positions are modified to phosphoserine: Ser-21 and Ser-27. Polar residues predominate over residues 49–58 (SPISTLSSPI). 2 positions are modified to phosphoserine; by MAPK8 and MAPK9: Ser-56 and Ser-70. Polar residues predominate over residues 78–104 (SVPTTPTLGFSTGSPQLSSPMNPVSSS). Phosphothreonine; by MAPK8 and MAPK9 is present on Thr-82. A Glycyl lysine isopeptide (Lys-Gly) (interchain with G-Cter in SUMO) cross-link involves residue Lys-108. Ser-129 carries the phosphoserine modification. Residues Cys-135 and Cys-138 each contribute to the Zn(2+) site. The segment at 135 to 155 (CAICGDRSSGKHYGVYSCEGC) adopts an NR C4-type zinc-finger fold. The nuclear receptor DNA-binding region spans 135 to 200 (CAICGDRSSG…RYQKCLAMGM (66 aa)). Position 145 is an N6-acetyllysine; by EP300 (Lys-145). Zn(2+) is bound by residues Cys-152 and Cys-155. The nuclear localization signal stretch occupies residues 160-165 (KRTVRK). Zn(2+) contacts are provided by Cys-171, Cys-177, Cys-187, and Cys-190. An NR C4-type zinc finger spans residues 171–195 (CRDNKDCLIDKRQRNRCQYCRYQKC). Residues 201-224 (KREAVQEERQRGKDRNENEVESTS) form a hinge region. The segment covering 206–218 (QEERQRGKDRNEN) has biased composition (basic and acidic residues). The disordered stretch occupies residues 206–228 (QEERQRGKDRNENEVESTSSANE). In terms of domain architecture, NR LBD spans 227 to 458 (NEDMPVERIL…TFLMEMLEAP (232 aa)). Ser-259 carries the post-translational modification Phosphoserine. Residue Ser-260 is modified to Phosphoserine; by MAPK8 and MAPK9. Arg-316 and Ala-327 together coordinate 9-cis-retinoate. Residues Arg-316 and Ala-327 each coordinate all-trans-retinoate. Positions 348-368 (RVLTELVSKMRDMQMDKTELG) are required for nuclear export.

The protein belongs to the nuclear hormone receptor family. NR2 subfamily. As to quaternary structure, homodimer. Heterodimer (via C-terminus) with RARA; required for ligand-dependent retinoic acid receptor transcriptional activity; association with RARA is enhanced by pulsatile shear stress. Heterodimer with PPARA (via the leucine-like zipper in the LBD); the interaction is required for PPARA transcriptional activity. Heterodimerizes with PPARG. Heterodimerizes (via NR LBD) with RARB. Heterodimerizes with NR1H4; the heterodimerization enhances the binding affinity for LXXLL motifs from coactivators. Interacts with NCOA3 and NCOA6 coactivators. Interacts with coactivator FAM120B. Interacts with coactivator PELP1, SENP6, SFPQ, DNTTIP2 and RNF8. Interacts with PRMT2. Interacts with ASXL1. Interacts with BHLHE40/DEC1, BHLHE41/DEC2, NCOR1 and NCOR2. Interacts in a ligand-dependent fashion with MED1 and NCOA1. Interacts with VDR. Interacts with EP300; the interaction is decreased by 9-cis retinoic acid. Heterodimer (via C-terminus) with NR4A1 (via DNA-binding domain); DNA-binding of the heterodimer is enhanced by 9-cis retinoic acid. NR4A1 competes with EP300 for interaction with RXRA and thereby attenuates EP300 mediated acetylation of RXRA. In the absence of hormonal ligand, interacts with TACC1. Interacts ith IGFBP3. (Microbial infection) Interacts (via the DNA binding domain) with HCV core protein; the interaction enhances the transcriptional activities of the RXRA/RARA and the RXRA/PPARA heterodimers. In terms of processing, acetylated by EP300; acetylation enhances DNA binding and transcriptional activity. Post-translationally, phosphorylated on serine and threonine residues mainly in the N-terminal modulating domain. Constitutively phosphorylated on Ser-21 in the presence or absence of ligand. Under stress conditions, hyperphosphorylated by activated JNK on Ser-56, Ser-70, Thr-82 and Ser-260. Phosphorylated on Ser-27, in vitro, by PKA. This phosphorylation is required for repression of cAMP-mediated transcriptional activity of RARA. Ubiquitinated by UBR5, leading to its degradation: UBR5 specifically recognizes and binds ligand-bound RXRA when it is not associated with coactivators (NCOAs). In presence of NCOAs, the UBR5-degron is not accessible, preventing its ubiquitination and degradation. In terms of processing, sumoylation negatively regulates transcriptional activity. Desumoylated specifically by SENP6. Expressed in lung fibroblasts (at protein level). Expressed in monocytes. Highly expressed in liver, also found in kidney and brain.

The protein resides in the nucleus. It localises to the cytoplasm. Its subcellular location is the mitochondrion. In terms of biological role, receptor for retinoic acid that acts as a transcription factor. Forms homo- or heterodimers with retinoic acid receptors (RARs) and binds to target response elements in response to their ligands, all-trans or 9-cis retinoic acid, to regulate gene expression in various biological processes. The RAR/RXR heterodimers bind to the retinoic acid response elements (RARE) composed of tandem 5'-AGGTCA-3' sites known as DR1-DR5 to regulate transcription. The high affinity ligand for retinoid X receptors (RXRs) is 9-cis retinoic acid. In the absence of ligand, the RXR-RAR heterodimers associate with a multiprotein complex containing transcription corepressors that induce histone deacetylation, chromatin condensation and transcriptional suppression. On ligand binding, the corepressors dissociate from the receptors and coactivators are recruited leading to transcriptional activation. Serves as a common heterodimeric partner for a number of nuclear receptors, such as RARA, RARB and PPARA. The RXRA/RARB heterodimer can act as a transcriptional repressor or transcriptional activator, depending on the RARE DNA element context. The RXRA/PPARA heterodimer is required for PPARA transcriptional activity on fatty acid oxidation genes such as ACOX1 and the P450 system genes. Together with RARA, positively regulates microRNA-10a expression, thereby inhibiting the GATA6/VCAM1 signaling response to pulsatile shear stress in vascular endothelial cells. Acts as an enhancer of RARA binding to RARE DNA element. May facilitate the nuclear import of heterodimerization partners such as VDR and NR4A1. Promotes myelin debris phagocytosis and remyelination by macrophages. Plays a role in the attenuation of the innate immune system in response to viral infections, possibly by negatively regulating the transcription of antiviral genes such as type I IFN genes. Involved in the regulation of calcium signaling by repressing ITPR2 gene expression, thereby controlling cellular senescence. This Homo sapiens (Human) protein is Retinoic acid receptor RXR-alpha (RXRA).